The chain runs to 309 residues: Syndecan-1 (309 aa).

Residues 1 to 22 (MRRAALWLWLCALALRLQPVLP) form the signal peptide. Over 23 to 253 (QIVTVNVPPE…GLLDRKEVLG (231 aa)) the chain is Extracellular. 2 disordered regions span residues 28–57 (NVPPEDQDGSGDDSDNFSGSGTGALPDITL) and 145–185 (TTAQ…GGTS). Acidic residues predominate over residues 32 to 42 (EDQDGSGDDSD). A glycan (O-linked (Xyl...) (chondroitin sulfate) serine) is linked at S37. N43 is a glycosylation site (N-linked (GlcNAc...) asparagine). Residues S45 and S47 are each glycosylated (O-linked (Xyl...) (heparan sulfate) serine). A compositionally biased stretch (low complexity) spans 173-183 (GQPDQQPPSGG). Residues S205 and S215 are each glycosylated (O-linked (Xyl...) (chondroitin sulfate) serine). Residues 254–274 (GVIAGGLVGLIFAVCLVGFML) form a helical membrane-spanning segment. Over 275 to 309 (YRMKKKDEGSYSLEEPKQANGGAYQKPTKQEEFYA) the chain is Cytoplasmic. Residues 283–309 (GSYSLEEPKQANGGAYQKPTKQEEFYA) are disordered. S284 carries the phosphoserine modification.

It belongs to the syndecan proteoglycan family. As to quaternary structure, interacts with CDCP1. Interacts (via C-terminus) with TIAM1 (via PDZ domain). Interacts with MDK. In terms of processing, shedding is enhanced by a number of factors such as heparanase, thrombin or EGF. Also by stress and wound healing. PMA-mediated shedding is inhibited by TIMP3.

It is found in the membrane. The protein localises to the secreted. Its subcellular location is the extracellular exosome. Its function is as follows. Cell surface proteoglycan that contains both heparan sulfate and chondroitin sulfate and that links the cytoskeleton to the interstitial matrix. Regulates exosome biogenesis in concert with SDCBP and PDCD6IP. Able to induce its own expression in dental mesenchymal cells and also in the neighboring dental epithelial cells via an MSX1-mediated pathway. This is Syndecan-1 from Mesocricetus auratus (Golden hamster).